The following is an 880-amino-acid chain: Alanine--tRNA ligase (880 aa).

Residues H566, H570, C668, and H672 each contribute to the Zn(2+) site.

This sequence belongs to the class-II aminoacyl-tRNA synthetase family. Zn(2+) serves as cofactor.

It is found in the cytoplasm. It catalyses the reaction tRNA(Ala) + L-alanine + ATP = L-alanyl-tRNA(Ala) + AMP + diphosphate. In terms of biological role, catalyzes the attachment of alanine to tRNA(Ala) in a two-step reaction: alanine is first activated by ATP to form Ala-AMP and then transferred to the acceptor end of tRNA(Ala). Also edits incorrectly charged Ser-tRNA(Ala) and Gly-tRNA(Ala) via its editing domain. This chain is Alanine--tRNA ligase, found in Trichormus variabilis (strain ATCC 29413 / PCC 7937) (Anabaena variabilis).